Here is a 27-residue protein sequence, read N- to C-terminus: Phospholipase A2 1 (27 aa).

Belongs to the phospholipase A2 family. Group I subfamily. Requires Ca(2+) as cofactor. Expressed by the venom gland.

It localises to the secreted. It carries out the reaction a 1,2-diacyl-sn-glycero-3-phosphocholine + H2O = a 1-acyl-sn-glycero-3-phosphocholine + a fatty acid + H(+). Snake venom phospholipase A2 (PLA2) that inhibits neuromuscular transmission by blocking acetylcholine release from the nerve termini. PLA2 catalyzes the calcium-dependent hydrolysis of the 2-acyl groups in 3-sn-phosphoglycerides. This chain is Phospholipase A2 1, found in Micrurus nigrocinctus (Central American coral snake).